A 323-amino-acid polypeptide reads, in one-letter code: tRNA U34 carboxymethyltransferase (323 aa).

Residues K91, W105, K110, G130, 181-182 (IE), M196, Y200, and R315 contribute to the carboxy-S-adenosyl-L-methionine site.

The protein belongs to the class I-like SAM-binding methyltransferase superfamily. CmoB family. In terms of assembly, homotetramer.

It carries out the reaction carboxy-S-adenosyl-L-methionine + 5-hydroxyuridine(34) in tRNA = 5-carboxymethoxyuridine(34) in tRNA + S-adenosyl-L-homocysteine + H(+). Catalyzes carboxymethyl transfer from carboxy-S-adenosyl-L-methionine (Cx-SAM) to 5-hydroxyuridine (ho5U) to form 5-carboxymethoxyuridine (cmo5U) at position 34 in tRNAs. The sequence is that of tRNA U34 carboxymethyltransferase from Yersinia pseudotuberculosis serotype O:1b (strain IP 31758).